Reading from the N-terminus, the 1406-residue chain is Enhancer of mRNA-decapping protein 4 (1406 aa).

At alanine 2 the chain carries N-acetylalanine. Serine 3 and serine 6 each carry phosphoserine. Lysine 125 carries the post-translational modification N6-acetyllysine. WD repeat units follow at residues glycine 174 to glutamine 214, asparagine 230 to asparagine 277, glycine 295 to proline 334, and proline 342 to threonine 393. 4 positions are modified to phosphoserine: serine 560, serine 565, serine 583, and serine 585. Disordered stretches follow at residues serine 604–serine 631 and serine 667–proline 686. The segment covering serine 609–serine 631 has biased composition (low complexity). Phosphoserine occurs at positions 680, 712, 727, and 729. The interval glutamate 719 to leucine 744 is disordered. The span at alanine 726–leucine 744 shows a compositional bias: polar residues. Threonine 731 is subject to Phosphothreonine. A phosphoserine mark is found at serine 733 and serine 745. Disordered stretches follow at residues histidine 782–glutamine 855 and glutamine 873–proline 951. Polar residues-rich tracts occupy residues glutamate 823 to tryptophan 832 and glutamate 841 to asparagine 852. A Phosphothreonine modification is found at threonine 826. Serine 849 and serine 876 each carry phosphoserine. Residue threonine 879 is modified to Phosphothreonine. A phosphoserine mark is found at serine 880, serine 884, serine 892, serine 895, and serine 897. Residue threonine 906 is modified to Phosphothreonine. Positions histidine 971–glutamine 1030 form a coiled coil. Serine 1385 is modified (phosphoserine).

It belongs to the WD repeat EDC4 family. As to quaternary structure, part of a decapping complex consisting of DCP1A, DCP2, EDC3, EDC4 and probably DDX6. Part of a complex consisting of DCP1A, EDC3, EDC4 and DDX6. Part of a complex consisting of DCP1B, EDC3, EDC4 and DDX6. Interacts with DCP2. Interacts with RC3H1. Interacts with NBDY. Interacts with Tex19.1 and, probably, Tex19.2. Interacts with LSM14A. Interacts with DDX6.

It localises to the cytoplasm. It is found in the P-body. The protein resides in the nucleus. Its function is as follows. In the process of mRNA degradation, seems to play a role in mRNA decapping. Component of a complex containing DCP2 and DCP1A which functions in decapping of ARE-containing mRNAs. Promotes complex formation between DCP1A and DCP2. Enhances the catalytic activity of DCP2 (in vitro). The sequence is that of Enhancer of mRNA-decapping protein 4 from Mus musculus (Mouse).